The primary structure comprises 274 residues: Putative pyruvate, phosphate dikinase regulatory protein (274 aa).

149–156 contributes to the ADP binding site; the sequence is GVSRSSKT.

Belongs to the pyruvate, phosphate/water dikinase regulatory protein family. PDRP subfamily.

The catalysed reaction is N(tele)-phospho-L-histidyl/L-threonyl-[pyruvate, phosphate dikinase] + ADP = N(tele)-phospho-L-histidyl/O-phospho-L-threonyl-[pyruvate, phosphate dikinase] + AMP + H(+). It catalyses the reaction N(tele)-phospho-L-histidyl/O-phospho-L-threonyl-[pyruvate, phosphate dikinase] + phosphate + H(+) = N(tele)-phospho-L-histidyl/L-threonyl-[pyruvate, phosphate dikinase] + diphosphate. In terms of biological role, bifunctional serine/threonine kinase and phosphorylase involved in the regulation of the pyruvate, phosphate dikinase (PPDK) by catalyzing its phosphorylation/dephosphorylation. The polypeptide is Putative pyruvate, phosphate dikinase regulatory protein (Rhizorhabdus wittichii (strain DSM 6014 / CCUG 31198 / JCM 15750 / NBRC 105917 / EY 4224 / RW1) (Sphingomonas wittichii)).